The following is a 430-amino-acid chain: Adenylosuccinate synthetase (430 aa).

Residues 13–19 and 41–43 each bind GTP; these read GDEGKGK and GHT. The Proton acceptor role is filled by Asp-14. Residues Asp-14 and Gly-41 each contribute to the Mg(2+) site. IMP contacts are provided by residues 14-17, 39-42, Thr-130, Arg-144, Gln-225, Thr-240, and Arg-304; these read DEGK and NAGH. Catalysis depends on His-42, which acts as the Proton donor. Position 300-306 (300-306) interacts with substrate; the sequence is ASTGRPR. Residues Arg-306, 332-334, and 414-416 each bind GTP; these read KLD and STG.

The protein belongs to the adenylosuccinate synthetase family. In terms of assembly, homodimer. It depends on Mg(2+) as a cofactor.

It is found in the cytoplasm. It catalyses the reaction IMP + L-aspartate + GTP = N(6)-(1,2-dicarboxyethyl)-AMP + GDP + phosphate + 2 H(+). Its pathway is purine metabolism; AMP biosynthesis via de novo pathway; AMP from IMP: step 1/2. Functionally, plays an important role in the de novo pathway of purine nucleotide biosynthesis. Catalyzes the first committed step in the biosynthesis of AMP from IMP. This is Adenylosuccinate synthetase from Xylella fastidiosa (strain 9a5c).